Here is a 387-residue protein sequence, read N- to C-terminus: tRNA-specific 2-thiouridylase MnmA (387 aa).

ATP contacts are provided by residues 6–13 and Leu-32; that span reads AMSGGVDS. Catalysis depends on Cys-101, which acts as the Nucleophile. A disulfide bond links Cys-101 and Cys-199. Gly-125 provides a ligand contact to ATP. Residues 148 to 150 are interaction with tRNA; it reads KDQ. Cys-199 functions as the Cysteine persulfide intermediate in the catalytic mechanism.

It belongs to the MnmA/TRMU family.

It localises to the cytoplasm. It carries out the reaction S-sulfanyl-L-cysteinyl-[protein] + uridine(34) in tRNA + AH2 + ATP = 2-thiouridine(34) in tRNA + L-cysteinyl-[protein] + A + AMP + diphosphate + H(+). Functionally, catalyzes the 2-thiolation of uridine at the wobble position (U34) of tRNA, leading to the formation of s(2)U34. In Clavibacter michiganensis subsp. michiganensis (strain NCPPB 382), this protein is tRNA-specific 2-thiouridylase MnmA.